A 955-amino-acid polypeptide reads, in one-letter code: Thrombospondin-4 (955 aa).

The first 24 residues, 1–24 (MPRRKGLCLFLQMLLLHLYGVCQA), serve as a signal peptide directing secretion. A Laminin G-like domain is found at 25 to 192 (QPNYQVFDLL…MDELKLVMGG (168 aa)). The EGF-like 1 domain maps to 281 to 320 (PKPRCDATSCFRGVRCIDTEGGFQCGPCPEGYTGNGVICT). Cystine bridges form between Cys-285/Cys-296, Cys-290/Cys-305, Cys-308/Cys-319, Cys-325/Cys-336, Cys-330/Cys-345, Cys-348/Cys-372, Cys-378/Cys-392, Cys-386/Cys-401, Cys-404/Cys-416, Cys-422/Cys-435, Cys-429/Cys-445, Cys-447/Cys-458, Cys-474/Cys-479, Cys-484/Cys-504, Cys-520/Cys-540, Cys-543/Cys-563, Cys-579/Cys-599, Cys-602/Cys-622, Cys-640/Cys-660, Cys-680/Cys-700, and Cys-716/Cys-937. Positions 321–358 (DVDECRLNPCFLGVRCINTSPGFKCESCPPGYTGSTIQ) constitute an EGF-like 2; calcium-binding domain. Residues 374 to 415 (DTNECENGRNGGCTSNSLCINTMGSFRCGGCKPGYVGDQIKG) enclose the EGF-like 3; calcium-binding domain. In terms of domain architecture, EGF-like 4 spans 418 to 459 (PEKSCRHGQNPCHASAQCSEEKDGDVTCTCSVGWAGNGYLCG). TSP type-3 repeat units lie at residues 460-492 (KDTD…NSGQ), 493-528 (EDTD…NIDQ), 529-551 (KNSD…NNDQ), 552-587 (RDTD…NVDQ), 588-610 (KDKD…NPNQ), 611-648 (SDID…NSNQ), 649-688 (LDTD…NPGQ), and 689-724 (EDDN…EITL). The N-linked (GlcNAc...) asparagine glycan is linked to Asn-609. The interval 610-678 (QSDIDNDLVG…IPDTVPPGPD (69 aa)) is disordered. Residues 637 to 649 (TDNCPTVINSNQL) are compositionally biased toward polar residues. The span at 657 to 668 (GDECDDDDDNDG) shows a compositional bias: acidic residues. Residues 728–942 (RAYQTVVLDP…LKYRCNDTIP (215 aa)) form the TSP C-terminal domain. Asn-938 carries N-linked (GlcNAc...) asparagine glycosylation.

This sequence belongs to the thrombospondin family. Homotrimer; disulfide-linked.

The protein resides in the endoplasmic reticulum. The protein localises to the sarcoplasmic reticulum. It is found in the secreted. Its subcellular location is the extracellular space. It localises to the extracellular matrix. Functionally, adhesive glycoprotein that mediates cell-to-cell and cell-to-matrix interactions and may be involved in various processes including cellular proliferation, migration, adhesion and attachment. May play a role in ER stress response. May participate in the genesis and function of cardiac and skeletal muscle. The polypeptide is Thrombospondin-4 (thbs4) (Xenopus laevis (African clawed frog)).